Consider the following 716-residue polypeptide: Astellifadiene synthase (716 aa).

The tract at residues 1–323 is terpene cyclase; the sequence is MEFKYSTLID…SPRYYTDAKF (323 aa). Asp-92 provides a ligand contact to Mg(2+). Residues Asp-92, 179–182, Asn-223, 227–231, and 316–317 contribute to the substrate site; these read RIYD, SWEKE, and RY. The DDXXD 1 motif lies at 92 to 96; that stretch reads DDVID. The NSE/DTE motif lies at 223 to 231; it reads NDLVSWEKE. A prenyltransferase region spans residues 324-713; it reads SQRQLDWIKN…FQLKLILQFL (390 aa). Positions 436, 439, and 468 each coordinate isopentenyl diphosphate. Positions 475 and 479 each coordinate Mg(2+). The DDXXD 2 motif lies at 475 to 479; it reads DDVED. Residue Arg-484 coordinates dimethylallyl diphosphate. Isopentenyl diphosphate is bound at residue Arg-485. Dimethylallyl diphosphate is bound by residues Lys-562, Thr-563, Gln-598, Asn-605, Lys-615, and Lys-625.

This sequence in the N-terminal section; belongs to the terpene synthase family. It in the C-terminal section; belongs to the FPP/GGPP synthase family. As to quaternary structure, hexamer. The cofactor is Mg(2+).

The catalysed reaction is isopentenyl diphosphate + (2E,6E)-farnesyl diphosphate = (2E,6E,10E)-geranylgeranyl diphosphate + diphosphate. It carries out the reaction isopentenyl diphosphate + (2E,6E,10E)-geranylgeranyl diphosphate = (2E,6E,10E,14E)-geranylfarnesyl diphosphate + diphosphate. It catalyses the reaction (2E,6E,10E,14E)-geranylfarnesyl diphosphate = astellifadiene + diphosphate. It functions in the pathway secondary metabolite biosynthesis; terpenoid biosynthesis. Functionally, bifunctional terpene synthase that converts dimethylallyl diphosphate (DMAPP) and isopentenyl diphosphate (IPP) into astellifadiene. The C-terminal prenyltransferase (PT) domain of EvAS catalyzes formation of geranylfarnesyl pyrophosphate (GFPP), whereas the N-terminal terpene cyclase (TC) domain catalyzes the cyclization of GFPP to astellifadiene. This Emericella variicolor (Aspergillus stellatus) protein is Astellifadiene synthase.